Here is an 86-residue protein sequence, read N- to C-terminus: Small ribosomal subunit protein bS20 (86 aa).

The segment covering 1-22 has biased composition (basic residues); that stretch reads MANIKSAKKRAVQSEKRRKHNA. Residues 1 to 28 are disordered; that stretch reads MANIKSAKKRAVQSEKRRKHNASGRSMM.

This sequence belongs to the bacterial ribosomal protein bS20 family.

Functionally, binds directly to 16S ribosomal RNA. This chain is Small ribosomal subunit protein bS20, found in Serratia proteamaculans (strain 568).